Here is a 217-residue protein sequence, read N- to C-terminus: Oxygen-insensitive NAD(P)H nitroreductase (217 aa).

10–14 (RYSTK) contacts FMN. Positions 14, 41, 71, 74, and 107 each coordinate NAD(+). Asn71 serves as a coordination point for FMN. FMN-binding positions include 165-166 (EG) and 205-207 (KSR).

This sequence belongs to the nitroreductase family. In terms of assembly, homodimer. The cofactor is FMN.

Its function is as follows. Reduction of a variety of nitroaromatic compounds using NADH (and to lesser extent NADPH) as source of reducing equivalents; two electrons are transferred. Capable of reducing nitrofurazone. In Salmonella typhimurium (strain LT2 / SGSC1412 / ATCC 700720), this protein is Oxygen-insensitive NAD(P)H nitroreductase.